The chain runs to 499 residues: Zinc finger protein PLAG1 (499 aa).

Residues 1–33 (MATVIPGDLSEVRDTQKAPSGKRKRGESKPRKN) form a disordered region. The tract at residues 2 to 84 (ATVIPGDLSE…SKYKLQRHMA (83 aa)) is interaction with KPNA2. Residues 22–25 (KRKR) carry the Nuclear localization signal motif. 7 C2H2-type zinc fingers span residues 34 to 56 (FPCQLCDKAFNSVEKLKVHSFSH), 62 to 86 (YKCTHQDCTKAFVSKYKLQRHMATH), 92 to 114 (HKCNYCEKMFHRKDHLKNHLHTH), 121 to 143 (FKCEECGKSYNTKLGFKRHLALH), 150 to 172 (LTCKVCLQNFESTGVLLEHLKSH), 185 to 207 (HQCEHCERRFYTRKDVRRHMVVH), and 213 to 236 (FLCQYCAQRFGRKDHLTRHMKKSH). The interval 41–242 (KAFNSVEKLK…KKSHNQELLK (202 aa)) is decreased nuclear import with localization in the nucleus but also in the cytoplasm. The interval 243-383 (VKTEPVDFLD…SPASSSKLGL (141 aa)) is repression domain; contains 3 sumoylation motifs and massively decrease transcription activity. The tract at residues 243-499 (VKTEPVDFLD…TLPRFHQAFQ (257 aa)) is activates transcription; Inhibition of nuclear import due to lack of NLS and KPNA2 interaction. Residues Lys244 and Lys263 each participate in a glycyl lysine isopeptide (Lys-Gly) (interchain with G-Cter in SUMO) cross-link. Over residues 365 to 379 (GGAPSSSQDSPASSS) the composition is skewed to low complexity. The tract at residues 365–400 (GGAPSSSQDSPASSSKLGLEPQSGSPDDGAGDLSLS) is disordered. Positions 384 to 499 (EPQSGSPDDG…TLPRFHQAFQ (116 aa)) are massively activates transcription.

This sequence belongs to the krueppel C2H2-type zinc-finger protein family. As to quaternary structure, interacts with KPNA2, which escorts protein to the nucleus via interaction with nuclear localization signal. Interacts with E3 SUMO-protein ligase PIAS1, PIAS2 and PIAS4. Sumoylated with SUMO1; which inhibits transcriptional activity, but does not affect nuclear localization. Blockers of sumoylation pathway such as SENP3 and inactive UBE2I increases transcriptional capacity. Sumoylation is increased in the presence of PIAS1. In terms of processing, acetylated by lysine acetyltransferase EP300; which activates transcriptional capacity. Lysine residues that are sumoylated also seem to be target for acetylation. In terms of tissue distribution, expressed in heart, spleen, lung, kidney, brain, testis and epididymis but not in salivary glands.

It is found in the nucleus. Transcription factor whose activation results in up-regulation of target genes, such as IGFII, leading to uncontrolled cell proliferation: when overexpressed in cultured cells, higher proliferation rate and transformation are observed. Other target genes such as CRLF1, CRABP2, CRIP2, PIGF are strongly induced in cells with PLAG1 induction. Proto-oncogene whose ectopic expression can trigger the development of pleomorphic adenomas of the salivary gland and lipoblastomas. Cooperates with CBFB-MYH11. The protein is Zinc finger protein PLAG1 (Plag1) of Mus musculus (Mouse).